Here is a 318-residue protein sequence, read N- to C-terminus: Rhomboid-related protein 4 (318 aa).

At 1-21 (MQRRSRGINTGLILLLSQIFH) the chain is on the cytoplasmic side. The helical transmembrane segment at 22–42 (VGINNIPPVTLATLALNIWFF) threads the bilayer. Topologically, residues 43-106 (LNPQKPLYSS…RRLGSRWFAY (64 aa)) are extracellular. Residues 107-127 (VITTFSVLTGVVYLLLQFAVA) form a helical membrane-spanning segment. The Cytoplasmic segment spans residues 128–137 (EFMDEPDFKR). A helical membrane pass occupies residues 138 to 154 (SCAVGFSGVLFALKVLN). S144 functions as the Nucleophile in the catalytic mechanism. Residues 155–179 (NHYCPGGFVNILGFPVPNRFACWVE) are Extracellular-facing. The helical transmembrane segment at 180-204 (LVAIHLFSPGTSFAGHQAGILVGLM) threads the bilayer. H195 is a catalytic residue. Residues 205–318 (YTQGPLKKIM…RQRLHRFDSQ (114 aa)) are Cytoplasmic-facing. A ubiquitin-binding domain (UBD) region spans residues 271–286 (SEEEQLERALQASLWD). A disordered region spans residues 285–318 (WDRGHTRNSPPPYGFHLSPEEEMRRQRLHRFDSQ). Over residues 302 to 318 (SPEEEMRRQRLHRFDSQ) the composition is skewed to basic and acidic residues. Residues 303-318 (PEEEMRRQRLHRFDSQ) are VCP/p97-interacting motif (VIM).

Belongs to the peptidase S54 family. Interacts with BIK and STEAP3. Interacts (via C-terminal domain) with VCP. Interacts with ubiquitin and ubiquitinated proteins.

The protein resides in the endoplasmic reticulum membrane. It localises to the mitochondrion membrane. The catalysed reaction is Cleaves type-1 transmembrane domains using a catalytic dyad composed of serine and histidine that are contributed by different transmembrane domains.. Inhibited by aprotinin. In terms of biological role, intramembrane-cleaving serine protease that cleaves single transmembrane or multi-pass membrane proteins in the hydrophobic plane of the membrane, luminal loops and juxtamembrane regions. Involved in regulated intramembrane proteolysis and the subsequent release of functional polypeptides from their membrane anchors. Functional component of endoplasmic reticulum-associated degradation (ERAD) for misfolded membrane proteins. Required for the degradation process of some specific misfolded endoplasmic reticulum (ER) luminal proteins. Participates in the transfer of misfolded proteins from the ER to the cytosol, where they are destroyed by the proteasome in a ubiquitin-dependent manner. Functions in BIK, MPZ, PKD1, PTCRA, RHO, STEAP3 and TRAC processing. Involved in the regulation of exosomal secretion; inhibits the TSAP6-mediated secretion pathway. Involved in the regulation of apoptosis; modulates BIK-mediated apoptotic activity. Also plays a role in the regulation of spermatogenesis; inhibits apoptotic activity in spermatogonia. In Pongo abelii (Sumatran orangutan), this protein is Rhomboid-related protein 4 (RHBDD1).